Here is a 427-residue protein sequence, read N- to C-terminus: Serine hydroxymethyltransferase (427 aa).

(6S)-5,6,7,8-tetrahydrofolate-binding positions include Leu-118 and 122-124; that span reads GHL. At Lys-227 the chain carries N6-(pyridoxal phosphate)lysine. 351 to 353 lines the (6S)-5,6,7,8-tetrahydrofolate pocket; that stretch reads SPF.

This sequence belongs to the SHMT family. Homodimer. The cofactor is pyridoxal 5'-phosphate.

It is found in the cytoplasm. It carries out the reaction (6R)-5,10-methylene-5,6,7,8-tetrahydrofolate + glycine + H2O = (6S)-5,6,7,8-tetrahydrofolate + L-serine. Its pathway is one-carbon metabolism; tetrahydrofolate interconversion. It participates in amino-acid biosynthesis; glycine biosynthesis; glycine from L-serine: step 1/1. Functionally, catalyzes the reversible interconversion of serine and glycine with tetrahydrofolate (THF) serving as the one-carbon carrier. This reaction serves as the major source of one-carbon groups required for the biosynthesis of purines, thymidylate, methionine, and other important biomolecules. Also exhibits THF-independent aldolase activity toward beta-hydroxyamino acids, producing glycine and aldehydes, via a retro-aldol mechanism. The polypeptide is Serine hydroxymethyltransferase (Thermotoga petrophila (strain ATCC BAA-488 / DSM 13995 / JCM 10881 / RKU-1)).